Here is a 604-residue protein sequence, read N- to C-terminus: UvrABC system protein C (604 aa).

The region spanning 17–95 (SQPGVYRMLN…IKSLAPRYNI (79 aa)) is the GIY-YIG domain. The region spanning 204 to 239 (DEVLKTIEQKMFEASDRQAYEQAVLFRDQMQALRMI) is the UVR domain.

This sequence belongs to the UvrC family. In terms of assembly, interacts with UvrB in an incision complex.

It localises to the cytoplasm. In terms of biological role, the UvrABC repair system catalyzes the recognition and processing of DNA lesions. UvrC both incises the 5' and 3' sides of the lesion. The N-terminal half is responsible for the 3' incision and the C-terminal half is responsible for the 5' incision. The sequence is that of UvrABC system protein C from Nitrosomonas eutropha (strain DSM 101675 / C91 / Nm57).